The chain runs to 283 residues: 4-diphosphocytidyl-2-C-methyl-D-erythritol kinase (283 aa).

The active site involves K9. 93-103 (PIAAGLAGGSS) serves as a coordination point for ATP. The active site involves D135.

It belongs to the GHMP kinase family. IspE subfamily.

It catalyses the reaction 4-CDP-2-C-methyl-D-erythritol + ATP = 4-CDP-2-C-methyl-D-erythritol 2-phosphate + ADP + H(+). The protein operates within isoprenoid biosynthesis; isopentenyl diphosphate biosynthesis via DXP pathway; isopentenyl diphosphate from 1-deoxy-D-xylulose 5-phosphate: step 3/6. Functionally, catalyzes the phosphorylation of the position 2 hydroxy group of 4-diphosphocytidyl-2C-methyl-D-erythritol. The polypeptide is 4-diphosphocytidyl-2-C-methyl-D-erythritol kinase (Macrococcus caseolyticus (strain JCSC5402) (Macrococcoides caseolyticum)).